A 76-amino-acid chain; its full sequence is UPF0248 protein MMP0286 (76 aa).

The protein belongs to the UPF0248 family.

The sequence is that of UPF0248 protein MMP0286 from Methanococcus maripaludis (strain DSM 14266 / JCM 13030 / NBRC 101832 / S2 / LL).